The sequence spans 373 residues: Queuine tRNA-ribosyltransferase (373 aa).

The active-site Proton acceptor is the aspartate 93. Substrate contacts are provided by residues 93 to 97 (DSGGF), aspartate 147, glutamine 189, and glycine 216. Positions 247-253 (GVGAPED) are RNA binding. Aspartate 266 functions as the Nucleophile in the catalytic mechanism. Residues 271-275 (TRIAR) are RNA binding; important for wobble base 34 recognition. Zn(2+) is bound by residues cysteine 304, cysteine 306, cysteine 309, and histidine 335.

The protein belongs to the queuine tRNA-ribosyltransferase family. As to quaternary structure, homodimer. Within each dimer, one monomer is responsible for RNA recognition and catalysis, while the other monomer binds to the replacement base PreQ1. The cofactor is Zn(2+).

The catalysed reaction is 7-aminomethyl-7-carbaguanine + guanosine(34) in tRNA = 7-aminomethyl-7-carbaguanosine(34) in tRNA + guanine. The protein operates within tRNA modification; tRNA-queuosine biosynthesis. In terms of biological role, catalyzes the base-exchange of a guanine (G) residue with the queuine precursor 7-aminomethyl-7-deazaguanine (PreQ1) at position 34 (anticodon wobble position) in tRNAs with GU(N) anticodons (tRNA-Asp, -Asn, -His and -Tyr). Catalysis occurs through a double-displacement mechanism. The nucleophile active site attacks the C1' of nucleotide 34 to detach the guanine base from the RNA, forming a covalent enzyme-RNA intermediate. The proton acceptor active site deprotonates the incoming PreQ1, allowing a nucleophilic attack on the C1' of the ribose to form the product. After dissociation, two additional enzymatic reactions on the tRNA convert PreQ1 to queuine (Q), resulting in the hypermodified nucleoside queuosine (7-(((4,5-cis-dihydroxy-2-cyclopenten-1-yl)amino)methyl)-7-deazaguanosine). This Halothermothrix orenii (strain H 168 / OCM 544 / DSM 9562) protein is Queuine tRNA-ribosyltransferase.